The sequence spans 341 residues: Anthranilate phosphoribosyltransferase (341 aa).

5-phospho-alpha-D-ribose 1-diphosphate contacts are provided by residues G83, S91, 93–96 (NTST), 111–115 (KHGNR), and S123. Position 83 (G83) interacts with anthranilate. S95 is a binding site for Mg(2+). N114 contributes to the anthranilate binding site. R169 contacts anthranilate. The Mg(2+) site is built by D228 and E229.

It belongs to the anthranilate phosphoribosyltransferase family. As to quaternary structure, homodimer. The cofactor is Mg(2+).

The enzyme catalyses N-(5-phospho-beta-D-ribosyl)anthranilate + diphosphate = 5-phospho-alpha-D-ribose 1-diphosphate + anthranilate. It functions in the pathway amino-acid biosynthesis; L-tryptophan biosynthesis; L-tryptophan from chorismate: step 2/5. Its function is as follows. Catalyzes the transfer of the phosphoribosyl group of 5-phosphorylribose-1-pyrophosphate (PRPP) to anthranilate to yield N-(5'-phosphoribosyl)-anthranilate (PRA). The chain is Anthranilate phosphoribosyltransferase from Hyphomonas neptunium (strain ATCC 15444).